The chain runs to 330 residues: Mycothiol acetyltransferase (330 aa).

2 N-acetyltransferase domains span residues 5–142 (LVTD…MPLR) and 171–328 (VRLR…APRP). E36 is a 1D-myo-inositol 2-(L-cysteinylamino)-2-deoxy-alpha-D-glucopyranoside binding site. Residue 80-82 (VVV) participates in acetyl-CoA binding. Positions 142 to 161 (RDIAGDEPGGPWEAPELPEP) are disordered. E198, K238, and E254 together coordinate 1D-myo-inositol 2-(L-cysteinylamino)-2-deoxy-alpha-D-glucopyranoside. Acetyl-CoA contacts are provided by residues 258 to 260 (VGV) and 265 to 271 (QGSGLGR). A 1D-myo-inositol 2-(L-cysteinylamino)-2-deoxy-alpha-D-glucopyranoside-binding site is contributed by Y292. 297-302 (NEAAVR) contacts acetyl-CoA.

It belongs to the acetyltransferase family. MshD subfamily. Monomer.

It carries out the reaction 1D-myo-inositol 2-(L-cysteinylamino)-2-deoxy-alpha-D-glucopyranoside + acetyl-CoA = mycothiol + CoA + H(+). In terms of biological role, catalyzes the transfer of acetyl from acetyl-CoA to desacetylmycothiol (Cys-GlcN-Ins) to form mycothiol. The polypeptide is Mycothiol acetyltransferase (Nocardiopsis dassonvillei (strain ATCC 23218 / DSM 43111 / CIP 107115 / JCM 7437 / KCTC 9190 / NBRC 14626 / NCTC 10488 / NRRL B-5397 / IMRU 509) (Actinomadura dassonvillei)).